The sequence spans 284 residues: Proline-rich protein 32 (284 aa).

Disordered stretches follow at residues 59 to 80, 97 to 119, and 143 to 171; these read RPPF…APRH, EINS…NMSQ, and SGNN…RGPP.

The protein is Proline-rich protein 32 (Prr32) of Mus musculus (Mouse).